Consider the following 472-residue polypeptide: Keratin, type I cytoskeletal 14 (472 aa).

A head region spans residues 1–114 (MTTCSRQFTS…AGGDGLLVGS (114 aa)). The interval 115-150 (EKVTMQNLNDRLASYLDKVRALEEANADLEVKIRDW) is coil 1A. The IF rod domain maps to 115–426 (EKVTMQNLND…RLLEGEDAHL (312 aa)). Residues 151 to 168 (YQRQRPAEIKDYSPYFKT) form a linker 1 region. The segment at 169–260 (IEDLRNKILT…KNHEEEMNAL (92 aa)) is coil 1B. The segment at 261–283 (RGQVGGDVNVEMDAAPGVDLSRI) is linker 12. The tract at residues 284–422 (LNEMRDQYEK…ATYRRLLEGE (139 aa)) is coil 2. Residues 423-472 (DAHLSSSQFSSGSQSSRDVTSSSRQIRTKVMDVHDGKVVSTHEQVLRTKN) are tail. The tract at residues 425–472 (HLSSSQFSSGSQSSRDVTSSSRQIRTKVMDVHDGKVVSTHEQVLRTKN) is interaction with Type I keratins and keratin filaments. The segment at 426 to 472 (LSSSQFSSGSQSSRDVTSSSRQIRTKVMDVHDGKVVSTHEQVLRTKN) is disordered. The segment covering 427-445 (SSSQFSSGSQSSRDVTSSS) has biased composition (low complexity). A Phosphoserine modification is found at Ser435.

It belongs to the intermediate filament family. As to quaternary structure, heterotetramer of two type I and two type II keratins. Forms a disulfide-linked heterodimer (via 2B domains) with KRT5 (via 2B domains). Forms a heterodimer with KRT1; the interaction is more abundant in the absence of KRT5. Interacts with PLEC isoform 1C, when in a heterodimer with KRT5. Interacts with TRADD and with keratin filaments. Associates with other type I keratins. Interacts with EPPK1. Interacts with KLHL24. Interacts with PKP1 (via N-terminus) and PKP2. Post-translationally, a disulfide bond is formed between rather than within filaments and promotes the formation of a keratin filament cage around the nucleus. Ubiquitinated by the BCR(KLHL24) E3 ubiquitin ligase complex. In terms of tissue distribution, expressed in the corneal epithelium (at protein level). Detected in the basal layer, lowered within the more apically located layers specifically in the stratum spinosum, stratum granulosum but is not detected in stratum corneum. Strongly expressed in the outer root sheath of anagen follicles but not in the germinative matrix, inner root sheath or hair. Found in keratinocytes surrounding the club hair during telogen.

It localises to the cytoplasm. It is found in the nucleus. In terms of biological role, the nonhelical tail domain is involved in promoting KRT5-KRT14 filaments to self-organize into large bundles and enhances the mechanical properties involved in resilience of keratin intermediate filaments in vitro. The protein is Keratin, type I cytoskeletal 14 (KRT14) of Homo sapiens (Human).